A 568-amino-acid polypeptide reads, in one-letter code: Sulfite reductase [NADPH] hemoprotein beta-component (568 aa).

Residues C426, C432, C471, and C475 each coordinate [4Fe-4S] cluster. C475 contributes to the siroheme binding site.

The protein belongs to the nitrite and sulfite reductase 4Fe-4S domain family. Alpha(8)-beta(8). The alpha component is a flavoprotein, the beta component is a hemoprotein. It depends on siroheme as a cofactor. [4Fe-4S] cluster is required as a cofactor.

The enzyme catalyses hydrogen sulfide + 3 NADP(+) + 3 H2O = sulfite + 3 NADPH + 4 H(+). Its pathway is sulfur metabolism; hydrogen sulfide biosynthesis; hydrogen sulfide from sulfite (NADPH route): step 1/1. Component of the sulfite reductase complex that catalyzes the 6-electron reduction of sulfite to sulfide. This is one of several activities required for the biosynthesis of L-cysteine from sulfate. This chain is Sulfite reductase [NADPH] hemoprotein beta-component, found in Xylella fastidiosa (strain M12).